The sequence spans 751 residues: SKI family transcriptional corepressor 1 homolog-B (751 aa).

Disordered regions lie at residues 1-30, 234-267, 386-434, 459-569, and 600-635; these read MESIPNQLPAGRDSSCSPNSKDLQSYSGPP, SRKRTLPIGRSESSPSQPPRGQTQGEPSDVPHKT, LDVS…GIPP, YGNR…HGNK, and QRETSVKDVHEEEPSSTVEEMEPKNHQDENNISEER. Composition is skewed to polar residues over residues 14-27 and 244-259; these read SSCSPNSKDLQSYS and SESSPSQPPRGQTQGE. Residues 416 to 428 show a composition bias toward basic and acidic residues; sequence RNEEDKSGDESRS. The span at 479–491 shows a compositional bias: low complexity; the sequence is SESSSYRSVSPDV. The span at 539 to 558 shows a compositional bias: polar residues; the sequence is QENTQMHTLNDLHSTNSSET. Composition is skewed to basic and acidic residues over residues 559-569, 603-612, and 620-635; these read RPSDMESHGNK, TSVKDVHEEE, and MEPKNHQDENNISEER. A coiled-coil region spans residues 666 to 704; it reads SMAKEELQKQLVEQVELRKKLEREFQNLKDSFQDQMKRE.

It belongs to the SKI family.

It is found in the nucleus. Functionally, may inhibit BMP signaling. The chain is SKI family transcriptional corepressor 1 homolog-B (skor1b) from Danio rerio (Zebrafish).